The following is a 326-amino-acid chain: Eukaryotic translation initiation factor 3 subunit I (326 aa).

WD repeat units follow at residues 8 to 47 (GHER…RLGT), 50 to 89 (GHQG…VIAS), 145 to 184 (MTES…KVVD), 188 to 227 (DHSA…CLKT), and 285 to 326 (GHFG…NIFE).

Belongs to the eIF-3 subunit I family. In terms of assembly, component of the eukaryotic translation initiation factor 3 (eIF-3) complex. The eIF-3 complex interacts with pix.

The protein localises to the cytoplasm. Functionally, component of the eukaryotic translation initiation factor 3 (eIF-3) complex, which is involved in protein synthesis of a specialized repertoire of mRNAs and, together with other initiation factors, stimulates binding of mRNA and methionyl-tRNAi to the 40S ribosome. The eIF-3 complex specifically targets and initiates translation of a subset of mRNAs involved in cell proliferation. In Drosophila simulans (Fruit fly), this protein is Eukaryotic translation initiation factor 3 subunit I.